The chain runs to 386 residues: Phosphoglycerate kinase (386 aa).

Substrate is bound by residues 21 to 23 (DLN), Arg36, 59 to 62 (HLGR), Arg113, and Arg146. ATP is bound by residues Lys197, Glu314, and 340-343 (GGDT).

Belongs to the phosphoglycerate kinase family. In terms of assembly, monomer.

The protein resides in the cytoplasm. It carries out the reaction (2R)-3-phosphoglycerate + ATP = (2R)-3-phospho-glyceroyl phosphate + ADP. It participates in carbohydrate degradation; glycolysis; pyruvate from D-glyceraldehyde 3-phosphate: step 2/5. The polypeptide is Phosphoglycerate kinase (Marinobacter nauticus (strain ATCC 700491 / DSM 11845 / VT8) (Marinobacter aquaeolei)).